Consider the following 229-residue polypeptide: Coiled-coil domain-containing protein 134 (229 aa).

The signal sequence occupies residues 1 to 22; it reads MDPVQLLSFLLALLLPLGTALD. Residues 192–218 are a coiled coil; it reads NTDAFQKALREEEKRRRKEEKRKEIRK. The interval 201–229 is disordered; that stretch reads REEEKRRRKEEKRKEIRKGPRITRSRSEL. Basic residues predominate over residues 219-229; sequence GPRITRSRSEL. Residues 226-229 carry the Prevents secretion from ER motif; it reads RSEL.

It belongs to the CCDC134 family.

The protein resides in the endoplasmic reticulum lumen. Functionally, molecular adapter required to prevent protein hyperglycosylation of HSP90B1: during translation, associates with nascent HSP90B1 and the STT3A catalytic component of the OST-A complex and tethers them to a specialized translocon that forms a microenvironment for HSP90B1 folding. In the CCDC134-containing translocon, STT3A associates with the SRT pseudosubstrate motif of HSP90B1, preventing access to facultative glycosylation sites until folding is completed, preventing hyperglycosylation and subsequent degradation of HSP90B1. This Xenopus tropicalis (Western clawed frog) protein is Coiled-coil domain-containing protein 134 (ccdc134).